Reading from the N-terminus, the 71-residue chain is Sperm-associated antigen 11A (71 aa).

An N-terminal signal peptide occupies residues 1–19 (MIPRLLPFFASLLFAALLF). 3 disulfide bridges follow: C32-C61, C39-C54, and C44-C62.

Belongs to the beta-defensin family.

Its subcellular location is the secreted. Functionally, has antimicrobial activity against E.coli. Plays a role in the defense response in the male reproductive tract, contributing to sperm maturation, storage and protection. The protein is Sperm-associated antigen 11A of Mus musculus (Mouse).